The chain runs to 572 residues: Protein misato homolog 1 (572 aa).

The protein belongs to the misato family.

It localises to the mitochondrion outer membrane. The protein localises to the cytoplasm. In terms of biological role, involved in the regulation of mitochondrial distribution and morphology. Required for mitochondrial fusion and mitochondrial network formation. This chain is Protein misato homolog 1 (MSTO1), found in Bos taurus (Bovine).